The chain runs to 926 residues: MTELQAKDPQVLHTSGASPSPPHIGSPLLARLDSGPFQGSQHSDVSSVVSPIPISLDGLLFPRSCRGPELPDGKTGDQQSLSDVEGAFSGVEATHREGGRNSRAPEKDSRLLDSVLDSLLTPSGTEQSHASPPACEAITSWCLFGPELPEDPRSVPATKGLLSPLMSRPEIKAGDSSGTGAGQKVLPKGLSPPRQLLLPTSGSAHWPGAGVKPSPQPAAGEVEEDSGLETEGSAAPLLKSKPRALEGTGSGGGVAANAASAAPGGVTLVPKEDSRFSAPRVSLEQDSPIAPGRSPLATTVVDFIHVPILPLNHALLAARTRQLLEGDSYDGGATAQGPFAPPRGSPSAPSPPVPCGDFPDCTYPLEGDPKEDVFPLYGDFQTPGLKIKEEEEGADAAVRSPRPYLSAGASSSTFPDFPLAPAPQRAPSSRPGEAAVAGGPSSAAVSPASSSGSALECILYKAEGAPPTQGSFAPLPCKPPAAGSCLLPRDSLPAAPATAAAPAIYQPLGLNGLPQLGYQAAVLKDSLPQVYPPYLNYLRPDSEASQSPQYGFDSLPQKICLICGDEASGCHYGVLTCGSCKVFFKRAMEGQHNYLCAGRNDCIVDKIRRKNCPACRLRKCCQAGMVLGGRKFKKFNKVRVMRTLDGVALPQSVGLPNESQALGQRITFSPNQEIQLVPPLINLLMSIEPDVVYAGHDNTKPDTSSSLLTSLNQLGERQLLSVVKWSKSLPGFRNLHIDDQITLIQYSWMSLMVFGLGWRSYKHVSGQMLYFAPDLILNEQRMKELSFYSLCLTMWQIPQEFVKLQVTHEEFLCMKVLLLLNTIPLEGLRSQSQFEEMRSSYIRELIKAIGLRQKGVVPSSQRFYQLTKLLDSLHDLVKQLHLYCLNTFIQSRTLAVEFPEMMSEVIAAQLPKILAGMVKPLLFHKK.

The tract at residues 1–48 is disordered; the sequence is MTELQAKDPQVLHTSGASPSPPHIGSPLLARLDSGPFQGSQHSDVSSV. The interval 1 to 165 is AF3; mediates transcriptional activation (in isoform B); the sequence is MTELQAKDPQ…PATKGLLSPL (165 aa). Positions 1–559 are modulating, Pro-Rich; sequence MTELQAKDPQ…YGFDSLPQKI (559 aa). K7 is covalently cross-linked (Glycyl lysine isopeptide (Lys-Gly) (interchain with G-Cter in SUMO)). The residue at position 20 (S20) is a Phosphoserine. The LXXL motif 1 signature appears at 56 to 60; it reads LDGLL. S82 is modified (phosphoserine). The LXXL motif 1 motif lies at 116–120; sequence LDSLL. Phosphoserine is present on residues S131 and S163. A mediates transcriptional transrepression (in isoform A) region spans residues 166-305; the sequence is MSRPEIKAGD…LATTVVDFIH (140 aa). The segment at 168–256 is disordered; the sequence is RPEIKAGDSS…GTGSGGGVAA (89 aa). Positions 184–188 match the Nuclear localization signal motif; that stretch reads KVLPK. A phosphoserine mark is found at S191 and S214. Position 294 is a phosphoserine; by MAPK1 (S294). Positions 327-364 are disordered; the sequence is DSYDGGATAQGPFAPPRGSPSAPSPPVPCGDFPDCTYP. The segment covering 339–354 has biased composition (pro residues); it reads FAPPRGSPSAPSPPVP. Phosphoserine; by MAPK is present on S345. K388 participates in a covalent cross-link: Glycyl lysine isopeptide (Lys-Gly) (interchain with G-Cter in SUMO); alternate. Residue K388 forms a Glycyl lysine isopeptide (Lys-Gly) (interchain with G-Cter in ubiquitin); alternate linkage. Positions 391–447 are disordered; the sequence is EEGADAAVRSPRPYLSAGASSSTFPDFPLAPAPQRAPSSRPGEAAVAGGPSSAAVSP. Phosphoserine; by CDK2 is present on S400. Over residues 422 to 447 the composition is skewed to low complexity; that stretch reads APQRAPSSRPGEAAVAGGPSSAAVSP. Residues 453-539 are AF1; mediates transcriptional activation; it reads SALECILYKA…VYPPYLNYLR (87 aa). K524 participates in a covalent cross-link: Glycyl lysine isopeptide (Lys-Gly) (interchain with G-Cter in SUMO). Positions 557 to 632 form a DNA-binding region, nuclear receptor; that stretch reads QKICLICGDE…AGMVLGGRKF (76 aa). 2 NR C4-type zinc fingers span residues 560-580 and 596-615; these read CLICGDEASGCHYGVLTCGSC and CAGRNDCIVDKIRRKNCPAC. S669 carries the post-translational modification Phosphoserine. The NR LBD domain maps to 672–906; the sequence is QEIQLVPPLI…EFPEMMSEVI (235 aa). The interval 673-926 is AF2; mediates transcriptional activation; it reads EIQLVPPLIN…MVKPLLFHKK (254 aa). R759 serves as a coordination point for progesterone.

This sequence belongs to the nuclear hormone receptor family. NR3 subfamily. In terms of assembly, interacts with SMARD1 and UNC45A. Interacts with CUEDC2; the interaction promotes ubiquitination, decreases sumoylation, and represses transcriptional activity. Interacts with PIAS3; the interaction promotes sumoylation of PR in a hormone-dependent manner, inhibits DNA-binding, and alters nuclear export. Interacts with SP1; the interaction requires ligand-induced phosphorylation on Ser-294 by ERK1/2 MAPK. Interacts with PRMT2. Isoform A interacts with NCOR2. Isoform B (but not isoform A) interacts with NCOA2 and NCOA1. Isoform B (but not isoform A) interacts with KLF9. Post-translationally, phosphorylated on multiple serine sites. Several of these sites are hormone-dependent. Phosphorylation on Ser-294 is highly hormone-dependent and modulates ubiquitination and sumoylation on Lys-388. Phosphorylation on Ser-345 also requires induction by hormone. Basal phosphorylation on Ser-82, Ser-163, Ser-191 and Ser-400 is increased in response to progesterone and can be phosphorylated in vitro by the CDK2-A1 complex. Increased levels of phosphorylation on Ser-400 also in the presence of EGF, heregulin, IGF, PMA and FBS. Phosphorylation at this site by CDK2 is ligand-independent, and increases nuclear translocation and transcriptional activity. Phosphorylation at Ser-163 and Ser-294, but not at Ser-191, is impaired during the G(2)/M phase of the cell cycle. Phosphorylation on Ser-345 by ERK1/2 MAPK is required for interaction with SP1. Sumoylation is hormone-dependent and represses transcriptional activity. Sumoylation on all three sites is enhanced by PIAS3. Desumoylated by SENP1. Sumoylation on Lys-388, the main site of sumoylation, is repressed by ubiquitination on the same site, and modulated by phosphorylation at Ser-294. In terms of processing, ubiquitination is hormone-dependent and represses sumoylation on the same site. Promoted by MAPK-mediated phosphorylation on Ser-294. Ubiquitinated by UBR5, leading to its degradation: UBR5 specifically recognizes and binds ligand-bound PGR when it is not associated with coactivators (NCOAs). In presence of NCOAs, the UBR5-degron is not accessible, preventing its ubiquitination and degradation. Post-translationally, palmitoylated by ZDHHC7 and ZDHHC21. Palmitoylation is required for plasma membrane targeting and for rapid intracellular signaling via ERK and AKT kinases and cAMP generation. In terms of tissue distribution, expression of isoform A and isoform B in mammary epithelial cells is temporally and spatially separated during normal mammary gland development. Isoform A and isoform B are expressed in the pituitary. Isoform A and isoform B are differentially expressed in the ovary and oviduct, and the level of expression is dependent on both the cell type and estrous cycle stage.

It localises to the nucleus. It is found in the cytoplasm. Its function is as follows. The steroid hormones and their receptors are involved in the regulation of eukaryotic gene expression and affect cellular proliferation and differentiation in target tissues. Depending on the isoform, progesterone receptor functions as a transcriptional activator or repressor. In terms of biological role, ligand-dependent transdominant repressor of steroid hormone receptor transcriptional activity including repression of its isoform B, MR and ER. Transrepressional activity may involve recruitment of corepressor NCOR2. Transcriptional activator of several progesteron-dependent promoters in a variety of cell types. Involved in activation of SRC-dependent MAPK signaling on hormone stimulation. The chain is Progesterone receptor (Pgr) from Mus musculus (Mouse).